A 586-amino-acid chain; its full sequence is YTH domain-containing family protein 2 (586 aa).

3 disordered regions span residues 98–128 (LKEKVKQSRALRQSVNNAAEQQPSTKPQPVQ), 141–181 (SQDQ…KESP), and 301–464 (QGLA…PLVS). Polar residues-rich tracts occupy residues 107 to 128 (ALRQSVNNAAEQQPSTKPQPVQ), 169 to 181 (TLPTTPRTIKESP), and 352 to 368 (SSQAALSCKSKQSTDIQ). Basic residues predominate over residues 398–418 (CARRHRSSSPRGRSGSHKSRR). The segment covering 421–436 (TDSPVSRSTTKSTPSR) has biased composition (polar residues). Residues 435–576 (SRARQPGHRD…YCGRDLLRLM (142 aa)) enclose the YTH domain. Over residues 441–458 (GHRDYREYRDDRNRDTKP) the composition is skewed to basic and acidic residues.

Belongs to the YTHDF family. YTHDF1 subfamily.

In terms of biological role, specifically recognizes and binds N6-methyladenosine (m6A)-containing mRNAs, and regulates their stability. M6A is a modification present at internal sites of mRNAs and some non-coding RNAs and plays a role in mRNA stability and processing. Plays a role in pathogenicity towards plant host. This Pyricularia oryzae (strain 70-15 / ATCC MYA-4617 / FGSC 8958) (Rice blast fungus) protein is YTH domain-containing family protein 2.